A 473-amino-acid polypeptide reads, in one-letter code: Adenosylhomocysteinase (473 aa).

Thr-64, Asp-139, and Glu-199 together coordinate substrate. Residue 200-202 coordinates NAD(+); the sequence is TTT. Residues Lys-229 and Asp-233 each coordinate substrate. NAD(+)-binding positions include Asn-234, 263–268, Glu-286, Asn-321, 342–344, and Asn-387; these read GYGDVG and IGH.

This sequence belongs to the adenosylhomocysteinase family. The cofactor is NAD(+).

It localises to the cytoplasm. The catalysed reaction is S-adenosyl-L-homocysteine + H2O = L-homocysteine + adenosine. The protein operates within amino-acid biosynthesis; L-homocysteine biosynthesis; L-homocysteine from S-adenosyl-L-homocysteine: step 1/1. Its function is as follows. May play a key role in the regulation of the intracellular concentration of adenosylhomocysteine. This is Adenosylhomocysteinase from Paraburkholderia phymatum (strain DSM 17167 / CIP 108236 / LMG 21445 / STM815) (Burkholderia phymatum).